Reading from the N-terminus, the 83-residue chain is DNA-directed RNA polymerase subunit omega (83 aa).

It belongs to the RNA polymerase subunit omega family. The RNAP catalytic core consists of 2 alpha, 1 beta, 1 beta' and 1 omega subunit. When a sigma factor is associated with the core the holoenzyme is formed, which can initiate transcription.

It carries out the reaction RNA(n) + a ribonucleoside 5'-triphosphate = RNA(n+1) + diphosphate. Functionally, promotes RNA polymerase assembly. Latches the N- and C-terminal regions of the beta' subunit thereby facilitating its interaction with the beta and alpha subunits. This chain is DNA-directed RNA polymerase subunit omega, found in Chromohalobacter salexigens (strain ATCC BAA-138 / DSM 3043 / CIP 106854 / NCIMB 13768 / 1H11).